Here is a 488-residue protein sequence, read N- to C-terminus: Glycogen synthase (488 aa).

Lys-16 is a binding site for ADP-alpha-D-glucose.

This sequence belongs to the glycosyltransferase 1 family. Bacterial/plant glycogen synthase subfamily.

It catalyses the reaction [(1-&gt;4)-alpha-D-glucosyl](n) + ADP-alpha-D-glucose = [(1-&gt;4)-alpha-D-glucosyl](n+1) + ADP + H(+). It functions in the pathway glycan biosynthesis; glycogen biosynthesis. Functionally, synthesizes alpha-1,4-glucan chains using ADP-glucose. The sequence is that of Glycogen synthase from Marinobacter nauticus (strain ATCC 700491 / DSM 11845 / VT8) (Marinobacter aquaeolei).